The sequence spans 233 residues: Esterase FUS5 (233 aa).

Active-site charge relay system residues include serine 105, aspartate 159, and histidine 187.

Belongs to the LovG family.

Functionally, esterase; part of the gene cluster that mediates the biosynthesis of the mycotoxin fusarin C. Within the cluster, FUS1, FUS2, FUS8 and FUS9 are sufficient for fusarin production. The other FUS cluster members are not essential for fusarin C biosynthesis. This chain is Esterase FUS5, found in Gibberella fujikuroi (strain CBS 195.34 / IMI 58289 / NRRL A-6831) (Bakanae and foot rot disease fungus).